Reading from the N-terminus, the 304-residue chain is DDRGK domain-containing protein 1 (304 aa).

Residues Met-1–Asp-2 are Lumenal-facing. Residues Leu-3–Leu-23 traverse the membrane as a helical segment. The Cytoplasmic portion of the chain corresponds to Gln-24–Ser-304. Residues Glu-31–Glu-174 are disordered. A compositionally biased stretch (low complexity) spans Arg-53–Ala-82. Basic and acidic residues predominate over residues Leu-105 to Glu-174.

Belongs to the DDRGK1 family. Interacts with Atg9; the interaction is transient.

Its subcellular location is the endoplasmic reticulum membrane. Substrate adapter for ufmylation, the covalent attachment of the ubiquitin-like modifier UFM1 to substrate proteins. Required for ufmylation of Atg9; protects the nervous system during aging, possibly by stabilizing Atg9 and supporting its function. This is DDRGK domain-containing protein 1 from Drosophila ananassae (Fruit fly).